Here is a 366-residue protein sequence, read N- to C-terminus: Galactose-1-phosphate uridylyltransferase (366 aa).

A Phosphoserine modification is found at Ser-27. Residues Cys-54 and Cys-57 each coordinate Zn(2+). UDP-alpha-D-glucose-binding positions include Ala-63 and 79 to 80 (ND). Residue His-124 coordinates Zn(2+). UDP-alpha-D-glucose is bound at residue Asn-169. Position 180 (His-180) interacts with Zn(2+). His-182 functions as the Tele-UMP-histidine intermediate in the catalytic mechanism. Gln-184 is a binding site for UDP-alpha-D-glucose. Positions 198, 297, 314, and 316 each coordinate Fe cation. UDP-alpha-D-glucose-binding positions include 329 to 332 (KFLV) and 334 to 335 (FE).

This sequence belongs to the galactose-1-phosphate uridylyltransferase type 1 family. As to quaternary structure, homodimer. It depends on Zn(2+) as a cofactor.

It catalyses the reaction alpha-D-galactose 1-phosphate + UDP-alpha-D-glucose = alpha-D-glucose 1-phosphate + UDP-alpha-D-galactose. The protein operates within carbohydrate metabolism; galactose metabolism. The chain is Galactose-1-phosphate uridylyltransferase (GAL7) from Saccharomyces cerevisiae (strain ATCC 204508 / S288c) (Baker's yeast).